We begin with the raw amino-acid sequence, 327 residues long: Annexin A8 (327 aa).

Annexin repeat units follow at residues 21 to 92 (FNPD…ALMY), 93 to 164 (PPYR…CLLQ), 177 to 249 (GLAL…TVVK), and 253 to 324 (NLHS…SLVG). Residues methionine 266, glycine 268, glycine 270, and aspartate 310 each contribute to the Ca(2+) site.

This sequence belongs to the annexin family.

In terms of biological role, this protein is an anticoagulant protein that acts as an indirect inhibitor of the thromboplastin-specific complex, which is involved in the blood coagulation cascade. The protein is Annexin A8 (ANXA8) of Pan troglodytes (Chimpanzee).